Consider the following 240-residue polypeptide: Izumo sperm-egg fusion protein 3 (240 aa).

An N-terminal signal peptide occupies residues 1–22 (MGDLWLLLLLPLSLAAFHGVKG). At 23 to 176 (CLECDPKFIE…DDPKKAESRE (154 aa)) the chain is on the extracellular side. A helical transmembrane segment spans residues 177–197 (IGLFLILLAEGVILGGVLLLF). Over 198–240 (HFCISHQRKMKAIRRSLKTYLEKKLEELMGIKDEKEKDFRGRE) the chain is Cytoplasmic.

Belongs to the Izumo family. In terms of assembly, monomer and homodimer.

Its subcellular location is the cell membrane. The protein is Izumo sperm-egg fusion protein 3 (IZUMO3) of Bos taurus (Bovine).